The sequence spans 616 residues: Dihydroxy-acid dehydratase (616 aa).

Aspartate 81 provides a ligand contact to Mg(2+). Cysteine 122 provides a ligand contact to [2Fe-2S] cluster. Mg(2+) is bound by residues aspartate 123 and lysine 124. The residue at position 124 (lysine 124) is an N6-carboxylysine. Residue cysteine 195 participates in [2Fe-2S] cluster binding. Glutamate 491 is a binding site for Mg(2+). Catalysis depends on serine 517, which acts as the Proton acceptor.

It belongs to the IlvD/Edd family. In terms of assembly, homodimer. [2Fe-2S] cluster serves as cofactor. Requires Mg(2+) as cofactor.

It carries out the reaction (2R)-2,3-dihydroxy-3-methylbutanoate = 3-methyl-2-oxobutanoate + H2O. The catalysed reaction is (2R,3R)-2,3-dihydroxy-3-methylpentanoate = (S)-3-methyl-2-oxopentanoate + H2O. Its pathway is amino-acid biosynthesis; L-isoleucine biosynthesis; L-isoleucine from 2-oxobutanoate: step 3/4. It functions in the pathway amino-acid biosynthesis; L-valine biosynthesis; L-valine from pyruvate: step 3/4. Functions in the biosynthesis of branched-chain amino acids. Catalyzes the dehydration of (2R,3R)-2,3-dihydroxy-3-methylpentanoate (2,3-dihydroxy-3-methylvalerate) into 2-oxo-3-methylpentanoate (2-oxo-3-methylvalerate) and of (2R)-2,3-dihydroxy-3-methylbutanoate (2,3-dihydroxyisovalerate) into 2-oxo-3-methylbutanoate (2-oxoisovalerate), the penultimate precursor to L-isoleucine and L-valine, respectively. The polypeptide is Dihydroxy-acid dehydratase (Escherichia coli O1:K1 / APEC).